The sequence spans 190 residues: Copper-binding lipoprotein NosL (190 aa).

The N-terminal stretch at 1-23 (MNALHRIGAGTLLAVLLAFGLTG) is a signal peptide. The N-palmitoyl cysteine moiety is linked to residue C24. C24 is lipidated: S-diacylglycerol cysteine. The interval 170 to 190 (MQHGGMHDHAPNGAHNAHAGH) is disordered. The span at 180–190 (PNGAHNAHAGH) shows a compositional bias: low complexity.

This sequence belongs to the NosL family. As to quaternary structure, monomer.

It localises to the cell membrane. Its function is as follows. May act as a metallochaperone involved in nitrous oxide reductase assembly. Specifically binds Cu(+). In Stutzerimonas stutzeri (Pseudomonas stutzeri), this protein is Copper-binding lipoprotein NosL.